The sequence spans 166 residues: MATSELSCLVSEENCERREAFWAEWKDLTLSTRPEEGCSLHEEDTQRHETYHRQGQCQALVQRSPWLVMRMGILGRGLQEYQLPYQRVLPLPIFTPAKVGTKEEREETPIQLQELLALETALGGQCVDRQDVAEITKQLPPVVPVSKPGTLRRSLSRSMSQEAQRG.

Phosphoserine is present on Ser39. The segment at 145–166 (VSKPGTLRRSLSRSMSQEAQRG) is disordered. Positions 156–166 (SRSMSQEAQRG) are enriched in polar residues.

In terms of assembly, interacts with MYOZ1, MYOZ2 and MYOZ3. Interacts with CSRP3. Interacts directly with the N-terminal Ig-like domains of 2 titin (TTN) molecules. Interacts with ANKRD2; the interaction is direct.

It localises to the cytoplasm. Its subcellular location is the myofibril. It is found in the sarcomere. Its function is as follows. Muscle assembly regulating factor. Mediates the antiparallel assembly of titin (TTN) molecules at the sarcomeric Z-disk. The chain is Telethonin (TCAP) from Bos taurus (Bovine).